The following is a 548-amino-acid chain: Phenylalanine--tRNA ligase beta subunit (548 aa).

Residues 275 to 350 (LKEDVLETTS…IAYGYNKFSG (76 aa)) form the B5 domain. The Mg(2+) site is built by Asp-328, Asp-334, Glu-337, and Glu-338.

It belongs to the phenylalanyl-tRNA synthetase beta subunit family. Type 2 subfamily. In terms of assembly, tetramer of two alpha and two beta subunits. Mg(2+) is required as a cofactor.

The protein resides in the cytoplasm. It carries out the reaction tRNA(Phe) + L-phenylalanine + ATP = L-phenylalanyl-tRNA(Phe) + AMP + diphosphate + H(+). The protein is Phenylalanine--tRNA ligase beta subunit of Methanocaldococcus jannaschii (strain ATCC 43067 / DSM 2661 / JAL-1 / JCM 10045 / NBRC 100440) (Methanococcus jannaschii).